The primary structure comprises 514 residues: Ammonium transporter 1 member 2 (514 aa).

11 helical membrane passes run 56–76, 91–111, 140–160, 165–185, 212–232, 257–277, 291–313, 328–348, 351–371, 380–400, and 431–451; these read LLFS…LCAG, VLDA…FAFG, FFLY…GSIA, FVAY…TVSH, FAGS…GALV, VVLG…GSFL, GQWS…AALT, IDVC…CAVV, WAAI…NLLA, LEAA…TGLF, and IVQI…LFYG. Residue Thr472 is modified to Phosphothreonine.

The protein belongs to the ammonia transporter channel (TC 1.A.11.2) family. High expression in root.

The protein resides in the membrane. Its function is as follows. Ammonium transporter probably involved in ammonium uptake from the soil. This is Ammonium transporter 1 member 2 (AMT1-2) from Arabidopsis thaliana (Mouse-ear cress).